A 1478-amino-acid chain; its full sequence is Bud site selection protein 3 homolog (1478 aa).

Disordered stretches follow at residues 732–889, 1085–1106, and 1146–1168; these read KSKC…PSKG, QRDSNLSGDNDADTPLPMHSSN, and YSHSHDEEIDSEKRANTKPVSAP. Over residues 749-761 the composition is skewed to polar residues; it reads LVSTNDNSRTLSP. A compositionally biased stretch (low complexity) spans 763-777; sequence TIISRTPRTISTITP. The span at 786 to 800 shows a compositional bias: polar residues; it reads GQASNSPARGSISTT. Basic and acidic residues predominate over residues 1146-1160; the sequence is YSHSHDEEIDSEKRA.

It belongs to the BUD3 family.

Its subcellular location is the cell tip. The protein resides in the cell septum. In terms of biological role, required for proper septum positioning and septum construction during septation. Acts as a landmark to mark sites for future septation, and as part of a scaffold that recruits components of the contractile ring to the site of septation. Not required to determine the site of lateral branch formation. The polypeptide is Bud site selection protein 3 homolog (BUD3) (Eremothecium gossypii (strain ATCC 10895 / CBS 109.51 / FGSC 9923 / NRRL Y-1056) (Yeast)).